The chain runs to 309 residues: Olfactory receptor 6C4 (309 aa).

At 1-23 (MKNRTMFGEFILLGLTNQPELQV) the chain is on the extracellular side. An N-linked (GlcNAc...) asparagine glycan is attached at Asn3. Residues 24-44 (MIFIFLFLTYMLSILGNLTII) form a helical membrane-spanning segment. The Cytoplasmic portion of the chain corresponds to 45–52 (TLTLLDPH). A helical membrane pass occupies residues 53–73 (LQTPMYFFLRNFSFLEISFTS). The Extracellular segment spans residues 74 to 97 (IFIPRFLTSMTTGNKVISFAGCLT). Cys95 and Cys187 are disulfide-bonded. Residues 98 to 118 (QYFFAIFLGATEFYLLASMSY) form a helical membrane-spanning segment. The Cytoplasmic portion of the chain corresponds to 119-137 (DRYVAICKPLHYLTIMSSR). The helical transmembrane segment at 138 to 158 (VCIQLVFCSWLGGFLAILPPI) threads the bilayer. The Extracellular portion of the chain corresponds to 159–195 (ILMTQVDFCVSNILNHYYCDYGPLVELACSDTSLLEL). Residues 196–215 (MVILLAVVTLMVTLVLVTLS) traverse the membrane as a helical segment. The Cytoplasmic portion of the chain corresponds to 216 to 235 (YTYIIRTILRIPSAQQRTKA). The chain crosses the membrane as a helical span at residues 236-256 (FSTCSSHMIVISLSYGSCMFM). Residues 257–269 (YINPSAKEGGAFN) are Extracellular-facing. A helical membrane pass occupies residues 270–290 (KGIAVLITSVTPLLNPFIYTL). The Cytoplasmic portion of the chain corresponds to 291–309 (RNQQVKQAFKDSVKKIVKL).

This sequence belongs to the G-protein coupled receptor 1 family.

The protein resides in the cell membrane. In terms of biological role, odorant receptor. This chain is Olfactory receptor 6C4 (OR6C4), found in Homo sapiens (Human).